Reading from the N-terminus, the 794-residue chain is Cadherin-12 (794 aa).

The signal sequence occupies residues 1–23 (MLTRNCLSLLLWVLFDGGLLTPL). A propeptide spanning residues 24-54 (QPQPQQTLATEPRENVIHLPGQRSHFQRVKR) is cleaved from the precursor. 5 Cadherin domains span residues 55–160 (GWVW…EPKF), 161–269 (LDGP…PPRF), 270–384 (PKSI…PPVF), 385–487 (SKPL…EFPP), and 488–609 (EISV…IFLP). At 55–609 (GWVWNQFFVL…SCNVEAIFLP (555 aa)) the chain is on the extracellular side. Asn256 is a glycosylation site (N-linked (GlcNAc...) asparagine). Residues Asn456, Asn537, and Asn545 are each glycosylated (N-linked (GlcNAc...) asparagine). Residues 610–637 (VGLSTGALIAILLCIVILLAIVVLYVAL) form a helical membrane-spanning segment. The Cytoplasmic portion of the chain corresponds to 638-794 (RRQKKKDTLM…EESYNPDKVT (157 aa)). The residue at position 787 (Ser787) is a Phosphoserine.

As to expression, brain.

The protein localises to the cell membrane. Functionally, cadherins are calcium-dependent cell adhesion proteins. They preferentially interact with themselves in a homophilic manner in connecting cells; cadherins may thus contribute to the sorting of heterogeneous cell types. The sequence is that of Cadherin-12 (CDH12) from Homo sapiens (Human).